An 893-amino-acid polypeptide reads, in one-letter code: Phosphatidate phosphatase LPIN2 (893 aa).

Positions 1–108 (MNYVGQLAGQ…LPAYLATSPI (108 aa)) are N-LIP. The residue at position 106 (Ser106) is a Phosphoserine. The segment at 122 to 216 (LVKSSGNERP…EDYKEPSLFH (95 aa)) is disordered. Over residues 123 to 151 (VKSSGNERPAQSSDVSHTLESEAVFTQSS) the composition is skewed to polar residues. Residues 152–162 (VKKKKRRRKKC) show a composition bias toward basic residues. Positions 153–158 (KKKKRR) match the Nuclear localization signal motif. Phosphoserine occurs at positions 174, 186, and 187. Over residues 204-213 (LKEEDYKEPS) the composition is skewed to basic and acidic residues. A phosphoserine mark is found at Ser243 and Ser303. 2 disordered regions span residues 357–400 (LLDA…PDDI) and 417–456 (FPKSDTDPGSRQWPESDTFSGSQSPQSVGSAAADSGTECL). Low complexity predominate over residues 360–371 (ADPVPSPSAEAP). Over residues 384-393 (KKKGVHKRSQ) the composition is skewed to basic residues. Residues 423–445 (DPGSRQWPESDTFSGSQSPQSVG) show a composition bias toward polar residues. Ser563 carries the post-translational modification Phosphoserine. Residues 568-611 (LPETKEGKSEVPPANDLPSNAEEPTSARPAENDTSSDEGSQELE) are disordered. Residues 601–611 (TSSDEGSQELE) show a composition bias toward acidic residues. The tract at residues 632–834 (YKKSLRLSSD…RIFTVNPKGE (203 aa)) is C-LIP. The DXDXT motif signature appears at 686–690 (DIDGT). The LXXIL motif motif lies at 697–701 (LGQIL).

This sequence belongs to the lipin family. Mg(2+) is required as a cofactor. In terms of tissue distribution, expressed at high level in liver and to some extend in lung, kidney, placenta, spleen, thymus, lymph node, prostate, testes, small intestine, and colon. Expressed also in circulating red blood cells and site of lymphopoiesis.

Its subcellular location is the nucleus. It is found in the cytoplasm. The protein localises to the cytosol. The protein resides in the endoplasmic reticulum membrane. It catalyses the reaction a 1,2-diacyl-sn-glycero-3-phosphate + H2O = a 1,2-diacyl-sn-glycerol + phosphate. With respect to regulation, inhibited by N-ethylmaleimide. In terms of biological role, acts as a magnesium-dependent phosphatidate phosphatase enzyme which catalyzes the conversion of phosphatidic acid to diacylglycerol during triglyceride, phosphatidylcholine and phosphatidylethanolamine biosynthesis in the endoplasmic reticulum membrane. Plays important roles in controlling the metabolism of fatty acids at different levels. Also acts as a nuclear transcriptional coactivator for PPARGC1A to modulate lipid metabolism. This chain is Phosphatidate phosphatase LPIN2, found in Mus musculus (Mouse).